The primary structure comprises 145 residues: D-aminoacyl-tRNA deacylase (145 aa).

Positions 137-138 (GP) match the Gly-cisPro motif, important for rejection of L-amino acids motif.

It belongs to the DTD family. As to quaternary structure, homodimer.

It is found in the cytoplasm. The enzyme catalyses glycyl-tRNA(Ala) + H2O = tRNA(Ala) + glycine + H(+). The catalysed reaction is a D-aminoacyl-tRNA + H2O = a tRNA + a D-alpha-amino acid + H(+). An aminoacyl-tRNA editing enzyme that deacylates mischarged D-aminoacyl-tRNAs. Also deacylates mischarged glycyl-tRNA(Ala), protecting cells against glycine mischarging by AlaRS. Acts via tRNA-based rather than protein-based catalysis; rejects L-amino acids rather than detecting D-amino acids in the active site. By recycling D-aminoacyl-tRNA to D-amino acids and free tRNA molecules, this enzyme counteracts the toxicity associated with the formation of D-aminoacyl-tRNA entities in vivo and helps enforce protein L-homochirality. The protein is D-aminoacyl-tRNA deacylase of Pseudomonas syringae pv. syringae (strain B728a).